Here is a 199-residue protein sequence, read N- to C-terminus: Adenylyl-sulfate kinase (199 aa).

Residue 34 to 41 coordinates ATP; that stretch reads GLSGSGKS. The active-site Phosphoserine intermediate is the Ser-108.

It belongs to the APS kinase family.

It catalyses the reaction adenosine 5'-phosphosulfate + ATP = 3'-phosphoadenylyl sulfate + ADP + H(+). The protein operates within sulfur metabolism; hydrogen sulfide biosynthesis; sulfite from sulfate: step 2/3. Its function is as follows. Catalyzes the synthesis of activated sulfate. The chain is Adenylyl-sulfate kinase from Oceanobacillus iheyensis (strain DSM 14371 / CIP 107618 / JCM 11309 / KCTC 3954 / HTE831).